A 54-amino-acid chain; its full sequence is Lectin alpha chain (54 aa).

Belongs to the leguminous lectin family. Tetramer of two alpha and two beta chains.

The protein is Lectin alpha chain of Lathyrus tingitanus (Tangier pea).